The chain runs to 310 residues: UPF0761 membrane protein VSAL_I2938 (310 aa).

A run of 6 helical transmembrane segments spans residues 34 to 54, 97 to 117, 136 to 156, 178 to 198, 207 to 227, and 242 to 262; these read YMAYITLLSLVPLVTVLLSVL, MTAVGSGFLFVASVMLISAID, FSLYWMILTLGPLLVWASLAA, LLGWLPIILSFSAFLGLYLLV, HALVGAMSAGCLFEVSKVGFA, and ALAAVPILFVWIYLCWIIVLI.

It belongs to the UPF0761 family.

It is found in the cell inner membrane. The sequence is that of UPF0761 membrane protein VSAL_I2938 from Aliivibrio salmonicida (strain LFI1238) (Vibrio salmonicida (strain LFI1238)).